The following is an 80-amino-acid chain: Cell division protein ZapB (80 aa).

The stretch at 3 to 80 (FEVFEKLEAK…ALLGKMEDVQ (78 aa)) forms a coiled coil.

It belongs to the ZapB family. Homodimer. The ends of the coiled-coil dimer bind to each other, forming polymers. Interacts with FtsZ.

The protein resides in the cytoplasm. In terms of biological role, non-essential, abundant cell division factor that is required for proper Z-ring formation. It is recruited early to the divisome by direct interaction with FtsZ, stimulating Z-ring assembly and thereby promoting cell division earlier in the cell cycle. Its recruitment to the Z-ring requires functional FtsA or ZipA. This is Cell division protein ZapB from Photorhabdus laumondii subsp. laumondii (strain DSM 15139 / CIP 105565 / TT01) (Photorhabdus luminescens subsp. laumondii).